A 175-amino-acid polypeptide reads, in one-letter code: Early E1A protein (175 aa).

The interval 40–48 is interaction with RB1 in competition with E2F1; that stretch reads PSLHDLFDL. Residues 106–110 carry the LXCXE motif, interaction with host RB1 motif; it reads LLCLE. A zinc finger lies at 146–164; sequence CLRCAYYQEQGENSICGLC.

It belongs to the adenoviridae E1A protein family. Interacts with host UBE2I; this interaction interferes with polySUMOylation. Interacts with host RB1; this interaction induces the aberrant dissociation of RB1-E2F1 complex thereby disrupting the activity of RB1 and activating E2F1-regulated genes. Interacts with host ATF7; the interaction enhances ATF7-mediated viral transactivation activity which requires the zinc binding domains of both proteins. Isoform early E1A 32 kDa protein and isoform early E1A 26 kDa protein interact (via N-terminus) with CUL1 and E3 ubiquitin ligase RBX1; these interactions inhibit RBX1-CUL1-dependent elongation reaction of ubiquitin chains and attenuate ubiquitination of SCF(FBXW7) target proteins. Interacts (via PXLXP motif) with host ZMYND11/BS69 (via MYND-type zinc finger); this interaction inhibits E1A mediated transactivation. Interacts with host EP300; this interaction stimulates the acetylation of RB1 by recruiting EP300 and RB1 into a multimeric-protein complex. Interacts with host CTBP1 and CTBP2; this interaction seems to potentiate viral replication. Interacts with host DCAF7. Interacts with host DYRK1A. Interacts with host KPNA4; this interaction allows E1A import into the host nucleus. Interacts with host EP400; this interaction stabilizes MYC. Interacts with host TBP protein; this interaction probably disrupts the TBP-TATA complex.

Its subcellular location is the host nucleus. Its function is as follows. Plays a role in viral genome replication by driving entry of quiescent cells into the cell cycle. Stimulation of progression from G1 to S phase allows the virus to efficiently use the cellular DNA replicating machinery to achieve viral genome replication. E1A protein has both transforming and trans-activating activities. Induces the disassembly of the E2F1 transcription factor from RB1 by direct competition for the same binding site on RB1, with subsequent transcriptional activation of E2F1-regulated S-phase genes and of the E2 region of the adenoviral genome. Release of E2F1 leads to the ARF-mediated inhibition of MDM2 and causes TP53/p53 to accumulate because it is not targeted for degradation by MDM2-mediated ubiquitination anymore. This increase in TP53, in turn, would arrest the cell proliferation and direct its death but this effect is counteracted by the viral protein E1B-55K. Inactivation of the ability of RB1 to arrest the cell cycle is critical for cellular transformation, uncontrolled cellular growth and proliferation induced by viral infection. Interaction with RBX1 and CUL1 inhibits ubiquitination of the proteins targeted by SCF(FBXW7) ubiquitin ligase complex, and may be linked to unregulated host cell proliferation. The tumorigenesis-restraining activity of E1A may be related to the disruption of the host CtBP-CtIP complex through the CtBP binding motif. The chain is Early E1A protein from Canis lupus familiaris (Dog).